A 605-amino-acid polypeptide reads, in one-letter code: Probable potassium transport system protein Kup 2 (605 aa).

12 helical membrane passes run Gly17 to Leu37, Val45 to Ala65, Met96 to Ile116, Ala139 to Phe159, Phe169 to Ile189, Gly211 to Leu231, Ala246 to Leu266, Leu286 to Ile306, Ile338 to Phe358, Ala367 to Phe387, Trp394 to Leu414, and Leu417 to Ile437.

This sequence belongs to the HAK/KUP transporter (TC 2.A.72) family.

It localises to the cell inner membrane. It catalyses the reaction K(+)(in) + H(+)(in) = K(+)(out) + H(+)(out). In terms of biological role, transport of potassium into the cell. Likely operates as a K(+):H(+) symporter. This chain is Probable potassium transport system protein Kup 2, found in Geobacter sulfurreducens (strain ATCC 51573 / DSM 12127 / PCA).